The chain runs to 280 residues: Nucleotide-binding protein Swoo_4243 (280 aa).

Residue 8–15 (GRSGSGKS) participates in ATP binding. 56-59 (DVRN) is a GTP binding site.

The protein belongs to the RapZ-like family.

Displays ATPase and GTPase activities. This Shewanella woodyi (strain ATCC 51908 / MS32) protein is Nucleotide-binding protein Swoo_4243.